A 427-amino-acid chain; its full sequence is MLDPRLFRTQLEETARQLGRRGFVLDTAAFGALEERRKALQVETQNLQNERNSRSRSIGQAKARGEDIEPLLAAVQGLGERLKENEAELASIQERMEALLLGVPNLLDTDVPEGRSEADNVEIRRWGEPPQFDFEPKDHVDLAVGLGCADFEAAAKLSGSRFVVLTGPLARLQRALTQFMLDIHTGEHGYIETYVPFLVNADSLRGTGQLPKFEEDLFKVQHEPVFYLIPTAEVPVTNLVRDEIVEEERLPLKYVCHTPCFRSEAGSYGRDVRGLIRQHQFEKVELVQIVRPEDSREAHEALTRHAEVILERLGLPYRRVLLCAGDTGFSSAKTYDLEVWLPGQQSYREISSCSNFRDFQARRLQARWRNPETGKPELVHTLNGSGLAVGRTLVAVLENCQDEAGRIRVPEVLVPYMGGVNLIGPAA.

231–233 (TAE) serves as a coordination point for L-serine. 262–264 (RSE) is an ATP binding site. Residue E285 participates in L-serine binding. 349-352 (EISS) provides a ligand contact to ATP. L-serine is bound at residue S385.

This sequence belongs to the class-II aminoacyl-tRNA synthetase family. Type-1 seryl-tRNA synthetase subfamily. As to quaternary structure, homodimer. The tRNA molecule binds across the dimer.

It is found in the cytoplasm. It carries out the reaction tRNA(Ser) + L-serine + ATP = L-seryl-tRNA(Ser) + AMP + diphosphate + H(+). The catalysed reaction is tRNA(Sec) + L-serine + ATP = L-seryl-tRNA(Sec) + AMP + diphosphate + H(+). It participates in aminoacyl-tRNA biosynthesis; selenocysteinyl-tRNA(Sec) biosynthesis; L-seryl-tRNA(Sec) from L-serine and tRNA(Sec): step 1/1. Catalyzes the attachment of serine to tRNA(Ser). Is also able to aminoacylate tRNA(Sec) with serine, to form the misacylated tRNA L-seryl-tRNA(Sec), which will be further converted into selenocysteinyl-tRNA(Sec). The chain is Serine--tRNA ligase from Methylococcus capsulatus (strain ATCC 33009 / NCIMB 11132 / Bath).